Consider the following 84-residue polypeptide: Inactive transposase YbfQ (84 aa).

The polypeptide is Inactive transposase YbfQ (ybfQ) (Escherichia coli (strain K12)).